Reading from the N-terminus, the 416-residue chain is Serine hydroxymethyltransferase (416 aa).

(6S)-5,6,7,8-tetrahydrofolate is bound by residues leucine 121 and 125–127 (GHL). Lysine 229 bears the N6-(pyridoxal phosphate)lysine mark.

This sequence belongs to the SHMT family. In terms of assembly, homodimer. The cofactor is pyridoxal 5'-phosphate.

Its subcellular location is the cytoplasm. It catalyses the reaction (6R)-5,10-methylene-5,6,7,8-tetrahydrofolate + glycine + H2O = (6S)-5,6,7,8-tetrahydrofolate + L-serine. Its pathway is one-carbon metabolism; tetrahydrofolate interconversion. It participates in amino-acid biosynthesis; glycine biosynthesis; glycine from L-serine: step 1/1. Catalyzes the reversible interconversion of serine and glycine with tetrahydrofolate (THF) serving as the one-carbon carrier. This reaction serves as the major source of one-carbon groups required for the biosynthesis of purines, thymidylate, methionine, and other important biomolecules. Also exhibits THF-independent aldolase activity toward beta-hydroxyamino acids, producing glycine and aldehydes, via a retro-aldol mechanism. This Neisseria gonorrhoeae (strain ATCC 700825 / FA 1090) protein is Serine hydroxymethyltransferase.